A 1107-amino-acid polypeptide reads, in one-letter code: Dynein axonemal assembly factor 1 homolog (1107 aa).

LRR repeat units follow at residues 34-56, 57-78, 79-100, 101-122, 125-146, and 150-171; these read HLNDILYLNYSGYNAIESLEEYV, GLKCLWLECNAISEIKGLEYQT, ELKCLYLQNNLITKIENLDSCK, QLDTLNLSHNHITRIENCGHDI, VLNTLNLSHNYLKTADNLDHLR, and FVSVLDLSHNRIEDIAIVKILG. The LRRCT domain maps to 184 to 223; that stretch reads NPVVNEIPSYRKTLILECKNLTYLDTRPVFDRDRACAEAW. 6 disordered regions span residues 258–281, 428–487, 500–608, 780–810, 834–855, and 1070–1107; these read HRGDGEPELLKTSSDEEDEDKASK, NESP…TLNV, ESKD…LEKE, KEEPKAPETPSIESEEEIPEELEVHSSEHEQ, SSEDLKSNFDDSSESSDSAEED, and AAHAGEVMQDTEDVESKPVEIDGTKEETVDSELADNCD. Polar residues predominate over residues 428-437; the sequence is NESPLTSPSF. The segment covering 446–459 has biased composition (acidic residues); it reads EEIEPTDVEEEQQI. Residues 500-512 show a composition bias toward basic and acidic residues; it reads ESKDGELISKVES. A compositionally biased stretch (acidic residues) spans 531–544; the sequence is DNSESEPTDITNED. Residues 549–560 are compositionally biased toward low complexity; that stretch reads SSSVSVTSSTDS. Residues 581–597 show a composition bias toward polar residues; it reads NYRQDSTTSTDSENEVS. Positions 801 to 810 are enriched in basic and acidic residues; that stretch reads LEVHSSEHEQ. The segment covering 844 to 855 has biased composition (acidic residues); it reads DSSESSDSAEED. Positions 1083-1097 are enriched in basic and acidic residues; that stretch reads VESKPVEIDGTKEET. The segment covering 1098–1107 has biased composition (acidic residues); the sequence is VDSELADNCD.

The protein belongs to the DNAAF1 family.

The protein resides in the cell projection. The protein localises to the cilium. Its function is as follows. Cilium-specific protein required for cilia structures. The chain is Dynein axonemal assembly factor 1 homolog from Aedes aegypti (Yellowfever mosquito).